The primary structure comprises 788 residues: Diacylglycerol kinase gamma (788 aa).

A compositionally biased stretch (basic and acidic residues) spans 83–93; that stretch reads PRQETPDHPKE. The tract at residues 83–150 is disordered; sequence PRQETPDHPK…WGEPNAPASS (68 aa). A compositionally biased stretch (polar residues) spans 95-109; sequence ASSSEPNVSDSNAES. 2 EF-hand domains span residues 172 to 207 and 217 to 252; these read RPQDKLEFMFRLYDSDENELLDQAELDQIVSQMLHV and ELRPILKEMLQGMDYNKDGFVSLEEWVSGGMTTIPL. Residues Asp-185, Asp-187, Asn-189, Glu-196, Asp-230, Asn-232, Asp-234, and Glu-241 each contribute to the Ca(2+) site. 2 Phorbol-ester/DAG-type zinc fingers span residues 268–318 and 333–380; these read RHAW…IPGC and QHAW…STAC. In terms of domain architecture, DAGKc spans 427–561; sequence PGTHPLLVLV…LDRWYLEVMP (135 aa). Residues 768–788 are disordered; that stretch reads MMGPPQKSSFFSLRRKSRSKD.

It belongs to the eukaryotic diacylglycerol kinase family. As to expression, expressed specifically in brain. Highly expressed in cerebellar Purkinje cells (at protein level).

It is found in the membrane. It localises to the cytoplasm. The protein localises to the cytosol. The protein resides in the cytoskeleton. It carries out the reaction a 1,2-diacyl-sn-glycerol + ATP = a 1,2-diacyl-sn-glycero-3-phosphate + ADP + H(+). The enzyme catalyses 1,2-didecanoyl-sn-glycerol + ATP = 1,2-didecanoyl-sn-glycero-3-phosphate + ADP + H(+). It catalyses the reaction 1,2-di-(9Z-octadecenoyl)-sn-glycerol + ATP = 1,2-di-(9Z-octadecenoyl)-sn-glycero-3-phosphate + ADP + H(+). The catalysed reaction is 1-octadecanoyl-2-(9Z,12Z)-octadecadienoyl-sn-glycerol + ATP = 1-octadecanoyl-2-(9Z,12Z-octadecadienoyl)-sn-glycero-3-phosphate + ADP + H(+). It carries out the reaction 1-octadecanoyl-2-(5Z,8Z,11Z,14Z-eicosatetraenoyl)-sn-glycerol + ATP = 1-octadecanoyl-2-(5Z,8Z,11Z,14Z-eicosatetraenoyl)-sn-glycero-3-phosphate + ADP + H(+). Its pathway is lipid metabolism; glycerolipid metabolism. Its activity is regulated as follows. The activity is calcium-dependent. Requires phosphatidylserine for maximal activity. Diacylglycerol kinase that converts diacylglycerol/DAG into phosphatidic acid/phosphatidate/PA and regulates the respective levels of these two bioactive lipids. Thereby, acts as a central switch between the signaling pathways activated by these second messengers with different cellular targets and opposite effects in numerous biological processes. Has no apparent specificity with regard to the acyl compositions of diacylglycerol. Specifically expressed in the cerebellum where it controls the level of diacylglycerol which in turn regulates the activity of protein kinase C gamma. Through protein kinase C gamma, indirectly regulates the dendritic development of Purkinje cells, cerebellar long term depression and ultimately cerebellar motor coordination. This Rattus norvegicus (Rat) protein is Diacylglycerol kinase gamma (Dgkg).